We begin with the raw amino-acid sequence, 363 residues long: Galanin receptor 2a (363 aa).

Residues 1–23 are Extracellular-facing; it reads MNASQQIHVFSSHWKVESVIISL. A helical membrane pass occupies residues 24 to 44; sequence IFSMIFLVGTVGNCLVLAVLI. The Cytoplasmic segment spans residues 45–54; sequence RNGQMNTKST. The chain crosses the membrane as a helical span at residues 55-75; sequence NLFILNLGLADLCFIVFCVPL. Over 76–94 the chain is Extracellular; the sequence is QATIYTMDEWVFGAFVCKA. Cysteines 92 and 169 form a disulfide. The chain crosses the membrane as a helical span at residues 95-115; that stretch reads VHFIIYLTMYASIFTLAAVSL. Over 116–135 the chain is Cytoplasmic; sequence DRYLAIRYPLRSRETRTPRN. The helical transmembrane segment at 136-156 threads the bilayer; it reads ALTSISLVWALSLFFSSPYLS. Residues 157–179 lie on the Extracellular side of the membrane; the sequence is YYQQMDLDGTTVCIPAWSVHHRQ. Residues 180–200 traverse the membrane as a helical segment; that stretch reads AMDICTFIFGYLIPVLILGIT. Topologically, residues 201–230 are cytoplasmic; sequence YARTIRYLWTSVDPMQDMSESRKAKRKVTK. The chain crosses the membrane as a helical span at residues 231 to 251; sequence MIIIVAVLFCLCWLPHHLVIL. Residues 252 to 268 are Extracellular-facing; sequence CMWFGHFPLNHTTYVLR. Residues 269–289 form a helical membrane-spanning segment; sequence ILSHLVAYANSCLNPIVYALV. Residues 290–363 are Cytoplasmic-facing; it reads SKHFRKGFKK…TSAFMTFNVT (74 aa).

It belongs to the G-protein coupled receptor 1 family. Expressed in neurons in the ventral area of the interpeduncular nucleus (IPN) where expression often overlaps with spx1.

It is found in the membrane. Its function is as follows. Receptor for the hormone galanin. Receptor for the hormones spexin-1 and spexin-2. In Danio rerio (Zebrafish), this protein is Galanin receptor 2a.